A 273-amino-acid polypeptide reads, in one-letter code: Octanoyltransferase LipM (273 aa).

Residues glycine 32–leucine 240 enclose the BPL/LPL catalytic domain. Cysteine 142 serves as the catalytic Acyl-thioester intermediate.

The protein belongs to the octanoyltransferase LipM family. In terms of assembly, monomer.

It carries out the reaction octanoyl-[ACP] + L-lysyl-[protein] = N(6)-octanoyl-L-lysyl-[protein] + holo-[ACP] + H(+). Its pathway is protein modification; protein lipoylation via endogenous pathway; protein N(6)-(lipoyl)lysine from octanoyl-[acyl-carrier-protein]. In terms of biological role, catalyzes the transfer of endogenously produced octanoic acid from octanoyl-acyl-carrier-protein onto the lipoyl domain of GcvH, an intermediate carrier during protein lipoylation. This Oceanobacillus iheyensis (strain DSM 14371 / CIP 107618 / JCM 11309 / KCTC 3954 / HTE831) protein is Octanoyltransferase LipM.